Consider the following 200-residue polypeptide: Recombination protein RecR (200 aa).

Residues 58–73 form a C4-type zinc finger; that stretch reads CEVCHNLAEEGLCAIC. The Toprim domain maps to 81–176; that stretch reads GLICVVEEPV…DISRLAYGMP (96 aa).

Belongs to the RecR family.

Its function is as follows. May play a role in DNA repair. It seems to be involved in an RecBC-independent recombinational process of DNA repair. It may act with RecF and RecO. The polypeptide is Recombination protein RecR (Magnetococcus marinus (strain ATCC BAA-1437 / JCM 17883 / MC-1)).